A 123-amino-acid polypeptide reads, in one-letter code: Zinc metalloproteinase-disintegrin-like jerdohagin (123 aa).

The region spanning 6 to 52 (RYLYIRHDREACTCHANSCIMSAYFSNSHVQYENYINDCKPQCILNE) is the Peptidase M12B domain. H12 contacts Zn(2+). Cysteines 19 and 24 form a disulfide. C48 and N51 together coordinate Ca(2+). A Disintegrin domain is found at 53-80 (LHSWVECESGECCEQCRSECDIAESCTN). Disulfide bonds link C59-C65, C64-C78, C72-C90, and C106-C116. Residues 71-73 (ECD) carry the D/ECD-tripeptide motif.

It belongs to the venom metalloproteinase (M12B) family. P-III subfamily. P-IIIa sub-subfamily. In terms of assembly, monomer. The cofactor is Zn(2+). Post-translationally, the N-terminus is blocked. In terms of tissue distribution, expressed by the venom gland.

The protein localises to the secreted. With respect to regulation, its proteolytic and hemorrhagic activities are inhibited by EDTA, but not by PMSF. Functionally, snake venom metalloproteinase that has high hemorrhagic activity and degrades the alpha-chain of fibrinogen (FGA), leaving the beta- and the gamma-chain intact. It may also inhibit platelet aggregation. Cleaves insulin B chain at '25-Phe-|-Val-26', '26-Val-|-Asn-27', '29-His-|-Leu-30', '30-Leu-|-Cys-31', '33-Ser-|-His-34', '35-Leu-|-Val-36', '40-Tyr-|-Leu-41', '41-Leu-|-Val-42', '42-Val-|-Cys-43', '43-Cys-|-Gly-44', '44-Gly-|-Glu-45', '46-Arg-|-Gly-47', '47-Gly-|-Phe-48', '49-Phe-|-Tyr-50' and '52-Pro-|-Lys-53' bonds. Also cleaves human prothrombin (72 kDa) and activation fragment F1 (27 kDa) of activated human prothrombin, to generate two new proteins of 68 and 23 kDa. This Protobothrops jerdonii (Jerdon's pitviper) protein is Zinc metalloproteinase-disintegrin-like jerdohagin.